Reading from the N-terminus, the 784-residue chain is Ubiquitin carboxyl-terminal hydrolase 1 (784 aa).

Disordered stretches follow at residues 1–21 (MPGV…SKKN) and 33–54 (TKRA…EYRG). The span at 7–16 (SESNGLSRGS) shows a compositional bias: polar residues. A phosphoserine mark is found at S16, S42, and S67. The 704-residue stretch at 81–784 (VGLNNLGNTC…TPYLLFYKKL (704 aa)) folds into the USP domain. Catalysis depends on C90, which acts as the Nucleophile. 2 stretches are compositionally biased toward basic and acidic residues: residues 232–243 (KVEEKSLQKEET) and 252–264 (DSTR…KEQL). 2 disordered regions span residues 232–341 (KVEE…KINW) and 363–411 (TNQR…SSEA). Residues 389-407 (NTVNGSGPASPGSSVTPVD) are compositionally biased toward polar residues. The residue at position 475 (S475) is a Phosphoserine. H593 (proton acceptor) is an active-site residue. The disordered stretch occupies residues 686-723 (PEKVVGTPFTDSRNSETNDTNGTQESDRSKESSDQTGI). The segment covering 694–709 (FTDSRNSETNDTNGTQ) has biased composition (polar residues). S767 carries the post-translational modification Phosphoserine.

The protein belongs to the peptidase C19 family. As to quaternary structure, interacts with FANCD2 and PCNA. Interacts with WDR48. Interacts with ATAD5; the interaction regulates USP1-mediated PCNA deubiquitination. Autocatalytic cleavage of USP1 following UV irradiation inactivates it, leading to an increase in ubiquitinated PCNA, recruitment of POLH and translesion synthesis. Post-translationally, ubiquitinated by the CRL2(KLHDC2) complex following autocatalytic cleavage, leading to its degradation: the CRL2(KLHDC2) complex recognizes the diglycine (Gly-Gly) at the C-terminus.

Its subcellular location is the nucleus. It catalyses the reaction Thiol-dependent hydrolysis of ester, thioester, amide, peptide and isopeptide bonds formed by the C-terminal Gly of ubiquitin (a 76-residue protein attached to proteins as an intracellular targeting signal).. Its function is as follows. Negative regulator of DNA damage repair which specifically deubiquitinates monoubiquitinated FANCD2. Also involved in PCNA-mediated translesion synthesis (TLS) by deubiquitinating monoubiquitinated PCNA. Has almost no deubiquitinating activity by itself and requires the interaction with WDR48 to have a high activity. The sequence is that of Ubiquitin carboxyl-terminal hydrolase 1 from Rattus norvegicus (Rat).